Here is a 156-residue protein sequence, read N- to C-terminus: ATP synthase subunit b (156 aa).

Residues leucine 7–leucine 29 form a helical membrane-spanning segment.

Belongs to the ATPase B chain family. F-type ATPases have 2 components, F(1) - the catalytic core - and F(0) - the membrane proton channel. F(1) has five subunits: alpha(3), beta(3), gamma(1), delta(1), epsilon(1). F(0) has three main subunits: a(1), b(2) and c(10-14). The alpha and beta chains form an alternating ring which encloses part of the gamma chain. F(1) is attached to F(0) by a central stalk formed by the gamma and epsilon chains, while a peripheral stalk is formed by the delta and b chains.

It localises to the cell inner membrane. Functionally, f(1)F(0) ATP synthase produces ATP from ADP in the presence of a proton or sodium gradient. F-type ATPases consist of two structural domains, F(1) containing the extramembraneous catalytic core and F(0) containing the membrane proton channel, linked together by a central stalk and a peripheral stalk. During catalysis, ATP synthesis in the catalytic domain of F(1) is coupled via a rotary mechanism of the central stalk subunits to proton translocation. Its function is as follows. Component of the F(0) channel, it forms part of the peripheral stalk, linking F(1) to F(0). In Burkholderia pseudomallei (strain 668), this protein is ATP synthase subunit b.